A 121-amino-acid polypeptide reads, in one-letter code: Histone H2B (121 aa).

The disordered stretch occupies residues 1-27 (MAPKKAPAAAEKKVKKAPTTEKKNKKK). Position 2 is a n,N,N-trimethylalanine (Ala-2). N6-acetyllysine occurs at positions 5 and 41. Residue Lys-115 forms a Glycyl lysine isopeptide (Lys-Gly) (interchain with G-Cter in ubiquitin) linkage.

It belongs to the histone H2B family. As to quaternary structure, the nucleosome is a histone octamer containing two molecules each of H2A, H2B, H3 and H4 assembled in one H3-H4 heterotetramer and two H2A-H2B heterodimers. The octamer wraps approximately 147 bp of DNA. In terms of processing, monoubiquitination of Lys-115 gives a specific tag for epigenetic transcriptional activation and is also prerequisite for histone H3 'Lys-4' and 'Lys-79' methylation. Post-translationally, acetylation occurs almost exclusively in the MAC.

It localises to the nucleus. The protein resides in the chromosome. Its function is as follows. Core component of nucleosome. Nucleosomes wrap and compact DNA into chromatin, limiting DNA accessibility to the cellular machineries which require DNA as a template. Histones thereby play a central role in transcription regulation, DNA repair, DNA replication and chromosomal stability. DNA accessibility is regulated via a complex set of post-translational modifications of histones, also called histone code, and nucleosome remodeling. In Tetrahymena pyriformis, this protein is Histone H2B.